The primary structure comprises 262 residues: Acyl-[acyl-carrier-protein]--UDP-N-acetylglucosamine O-acyltransferase (262 aa).

Belongs to the transferase hexapeptide repeat family. LpxA subfamily. In terms of assembly, homotrimer.

It is found in the cytoplasm. The catalysed reaction is a (3R)-hydroxyacyl-[ACP] + UDP-N-acetyl-alpha-D-glucosamine = a UDP-3-O-[(3R)-3-hydroxyacyl]-N-acetyl-alpha-D-glucosamine + holo-[ACP]. It participates in glycolipid biosynthesis; lipid IV(A) biosynthesis; lipid IV(A) from (3R)-3-hydroxytetradecanoyl-[acyl-carrier-protein] and UDP-N-acetyl-alpha-D-glucosamine: step 1/6. Functionally, involved in the biosynthesis of lipid A, a phosphorylated glycolipid that anchors the lipopolysaccharide to the outer membrane of the cell. In Shigella boydii serotype 18 (strain CDC 3083-94 / BS512), this protein is Acyl-[acyl-carrier-protein]--UDP-N-acetylglucosamine O-acyltransferase.